We begin with the raw amino-acid sequence, 214 residues long: Octanoyltransferase (214 aa).

A BPL/LPL catalytic domain is found at 36-214 (GRESEMVWLL…QQKFDTIFLQ (179 aa)). Substrate is bound by residues 75–82 (RGGKYSYH), 147–149 (AFG), and 160–162 (GFS). The active-site Acyl-thioester intermediate is the C178.

The protein belongs to the LipB family.

It localises to the cytoplasm. It carries out the reaction octanoyl-[ACP] + L-lysyl-[protein] = N(6)-octanoyl-L-lysyl-[protein] + holo-[ACP] + H(+). Its pathway is protein modification; protein lipoylation via endogenous pathway; protein N(6)-(lipoyl)lysine from octanoyl-[acyl-carrier-protein]: step 1/2. Catalyzes the transfer of endogenously produced octanoic acid from octanoyl-acyl-carrier-protein onto the lipoyl domains of lipoate-dependent enzymes. Lipoyl-ACP can also act as a substrate although octanoyl-ACP is likely to be the physiological substrate. The sequence is that of Octanoyltransferase from Anaplasma marginale (strain Florida).